Reading from the N-terminus, the 41-residue chain is Large ribosomal subunit protein bL36 (41 aa).

It belongs to the bacterial ribosomal protein bL36 family.

This is Large ribosomal subunit protein bL36 from Edwardsiella ictaluri (strain 93-146).